We begin with the raw amino-acid sequence, 84 residues long: MAVKLIYLFLFLYIALLISGRTMSTTAGRRDGKSGRTEWLYVAGECAKLPRCNKYCVSNGFHLGGFCEKLSPQASYLSCVCKYT.

The N-terminal stretch at 1–24 (MAVKLIYLFLFLYIALLISGRTMS) is a signal peptide. Cystine bridges form between Cys-46/Cys-67, Cys-52/Cys-79, and Cys-56/Cys-81.

It belongs to the DEFL family.

It is found in the secreted. This Arabidopsis thaliana (Mouse-ear cress) protein is Defensin-like protein 37 (EDA21).